Here is a 489-residue protein sequence, read N- to C-terminus: Threonine/serine exporter (489 aa).

The next 10 helical transmembrane spans lie at glycine 151 to glycine 171, tryptophan 174 to leucine 194, valine 206 to phenylalanine 226, serine 233 to leucine 253, phenylalanine 268 to leucine 288, isoleucine 314 to serine 334, valine 335 to tyrosine 355, leucine 356 to leucine 376, leucine 381 to isoleucine 401, and isoleucine 420 to isoleucine 440. The disordered stretch occupies residues phenylalanine 464–arginine 489. Over residues arginine 473–arginine 489 the composition is skewed to basic residues.

It belongs to the ThrE exporter (TC 2.A.79) family.

The protein resides in the cell membrane. It carries out the reaction L-threonine(in) + H(+)(out) = L-threonine(out) + H(+)(in). Transport is inhibited by the proton ionophore carbonyl cyanide m-chlorophenylhydrazone (CCCP). Catalyzes the export of L-threonine and L-serine from the cell to the extracellular environment. Export is dependent on the proton motive force. The polypeptide is Threonine/serine exporter (Corynebacterium glutamicum (Brevibacterium saccharolyticum)).